The sequence spans 324 residues: Sex-lethal homolog (324 aa).

RRM domains follow at residues 102–180 and 188–268; these read TNLI…YARP and TNLY…LAEE.

As to expression, expressed in somatic cells of both sexes throughout development, but not in the pole cells which are the progenitors of the germline.

Its subcellular location is the nucleus. Unknown; apparently not involved in somatic sex determination. This chain is Sex-lethal homolog (SXL), found in Musca domestica (House fly).